The following is a 529-amino-acid chain: uncharacterized protein (529 aa).

ATP contacts are provided by residues 178 to 186, aspartate 401, arginine 416, and lysine 510; that span reads TSGTTGQPK.

This sequence belongs to the ATP-dependent AMP-binding enzyme family.

This is an uncharacterized protein from Bacillus subtilis (strain 168).